The chain runs to 279 residues: Large ribosomal subunit protein uL2 (279 aa).

Positions 224–279 (AMNPIDHPHGGGEGRTSGGRHPVTPWGKGTKGNRTRKSKASDKLIVRSRHAKKKGR) are disordered. Residues 269-279 (VRSRHAKKKGR) show a composition bias toward basic residues.

Belongs to the universal ribosomal protein uL2 family. As to quaternary structure, part of the 50S ribosomal subunit. Forms a bridge to the 30S subunit in the 70S ribosome.

Functionally, one of the primary rRNA binding proteins. Required for association of the 30S and 50S subunits to form the 70S ribosome, for tRNA binding and peptide bond formation. It has been suggested to have peptidyltransferase activity; this is somewhat controversial. Makes several contacts with the 16S rRNA in the 70S ribosome. The protein is Large ribosomal subunit protein uL2 of Cereibacter sphaeroides (strain ATCC 17029 / ATH 2.4.9) (Rhodobacter sphaeroides).